The following is a 41-amino-acid chain: Photosystem I reaction center subunit IX (41 aa).

The chain crosses the membrane as a helical span at residues 7–27 (YLSTAPVLTLVSLTAVAGLLI).

Belongs to the PsaJ family.

It localises to the plastid. The protein resides in the chloroplast thylakoid membrane. In terms of biological role, may help in the organization of the PsaE and PsaF subunits. In Chlorella vulgaris (Green alga), this protein is Photosystem I reaction center subunit IX.